Reading from the N-terminus, the 61-residue chain is Small ribosomal subunit protein uS14 (61 aa).

Positions 24, 27, 40, and 43 each coordinate Zn(2+).

The protein belongs to the universal ribosomal protein uS14 family. Zinc-binding uS14 subfamily. In terms of assembly, part of the 30S ribosomal subunit. Contacts proteins S3 and S10. Zn(2+) is required as a cofactor.

Functionally, binds 16S rRNA, required for the assembly of 30S particles and may also be responsible for determining the conformation of the 16S rRNA at the A site. The protein is Small ribosomal subunit protein uS14 of Thermus thermophilus (strain ATCC BAA-163 / DSM 7039 / HB27).